Consider the following 432-residue polypeptide: Phosphomethylpyrimidine synthase (432 aa).

Substrate contacts are provided by residues N66, M95, Y124, H163, 185–187 (SRG), 226–229 (DGLR), and E265. Zn(2+) is bound at residue H269. Residue Y292 participates in substrate binding. H333 provides a ligand contact to Zn(2+). Residues C409, C412, and C416 each coordinate [4Fe-4S] cluster.

It belongs to the ThiC family. It depends on [4Fe-4S] cluster as a cofactor.

It catalyses the reaction 5-amino-1-(5-phospho-beta-D-ribosyl)imidazole + S-adenosyl-L-methionine = 4-amino-2-methyl-5-(phosphooxymethyl)pyrimidine + CO + 5'-deoxyadenosine + formate + L-methionine + 3 H(+). Its pathway is cofactor biosynthesis; thiamine diphosphate biosynthesis. Its function is as follows. Catalyzes the synthesis of the hydroxymethylpyrimidine phosphate (HMP-P) moiety of thiamine from aminoimidazole ribotide (AIR) in a radical S-adenosyl-L-methionine (SAM)-dependent reaction. The polypeptide is Phosphomethylpyrimidine synthase (Thermoanaerobacter pseudethanolicus (strain ATCC 33223 / 39E) (Clostridium thermohydrosulfuricum)).